Consider the following 200-residue polypeptide: Putative manganese exporter (200 aa).

Transmembrane regions (helical) follow at residues 13–33 (TEHV…AEIG), 53–73 (IIAA…WLGV), 81–101 (PDIL…WILI), 110–130 (SIST…AEIG), 150–170 (WVIV…VLIG), and 180–200 (GLIR…TAFF).

The protein belongs to the GDT1 family.

It localises to the cell inner membrane. Functionally, involved in manganese homeostasis. May function as a manganese exporter. In Vibrio cholerae serotype O1 (strain ATCC 39541 / Classical Ogawa 395 / O395), this protein is Putative manganese exporter.